The primary structure comprises 108 residues: MEQRFTHEDRFIMGLFPLLAVILISSNSSIIDIAMTVIIFGWIIYETLITVHFCKNYIETVESIMLGFVGFLGVLCLDKFPFGIILLIIYVIEGIYINVKTLKYARSC.

3 helical membrane-spanning segments follow: residues 11-31, 33-53, and 69-89; these read FIMGLFPLLAVILISSNSSII, IAMTVIIFGWIIYETLITVHF, and VGFLGVLCLDKFPFGIILLII.

It localises to the host membrane. The chain is Putative transmembrane protein ORF108 from Acidianus hospitalis (AFV-1).